We begin with the raw amino-acid sequence, 700 residues long: Polyribonucleotide nucleotidyltransferase (700 aa).

Positions 486 and 492 each coordinate Mg(2+). A KH domain is found at 554–613; that stretch reads PKIISTTINPDKIREVIGPGGKMINKIIDETGVKIDINDDGRVYIFSSDIQAGKRARSMI. The 69-residue stretch at 623-691 folds into the S1 motif domain; sequence GQVFLGRVIR…KQGRVNLSRK (69 aa).

This sequence belongs to the polyribonucleotide nucleotidyltransferase family. Mg(2+) is required as a cofactor.

The protein localises to the cytoplasm. The enzyme catalyses RNA(n+1) + phosphate = RNA(n) + a ribonucleoside 5'-diphosphate. Functionally, involved in mRNA degradation. Catalyzes the phosphorolysis of single-stranded polyribonucleotides processively in the 3'- to 5'-direction. The polypeptide is Polyribonucleotide nucleotidyltransferase (Acetivibrio thermocellus (strain ATCC 27405 / DSM 1237 / JCM 9322 / NBRC 103400 / NCIMB 10682 / NRRL B-4536 / VPI 7372) (Clostridium thermocellum)).